We begin with the raw amino-acid sequence, 80 residues long: Acyl carrier protein (80 aa).

Residues 4 to 79 (EEILQKVCSI…DAVKFIEEKK (76 aa)) form the Carrier domain. Serine 39 bears the O-(pantetheine 4'-phosphoryl)serine mark.

This sequence belongs to the acyl carrier protein (ACP) family. 4'-phosphopantetheine is transferred from CoA to a specific serine of apo-ACP by AcpS. This modification is essential for activity because fatty acids are bound in thioester linkage to the sulfhydryl of the prosthetic group.

The protein localises to the cytoplasm. It functions in the pathway lipid metabolism; fatty acid biosynthesis. In terms of biological role, carrier of the growing fatty acid chain in fatty acid biosynthesis. In Prochlorococcus marinus subsp. pastoris (strain CCMP1986 / NIES-2087 / MED4), this protein is Acyl carrier protein.